Here is a 196-residue protein sequence, read N- to C-terminus: Calcineurin B homologous protein 2 (196 aa).

Glycine 2 carries N-myristoyl glycine lipidation. EF-hand domains follow at residues 26 to 61 (ASLL…AVNP), 71 to 106 (FPNG…PKQP), 111 to 146 (SRMN…MVGV), and 152 to 187 (QLES…MNIE). Serine 27 carries the phosphoserine modification. Residues aspartate 124, aspartate 126, aspartate 128, lysine 130, and glutamate 135 each contribute to the Ca(2+) site. Residues 137–148 (LQVLRLMVGVQV) carry the Nuclear export signal motif. The Ca(2+) site is built by aspartate 165, aspartate 167, aspartate 169, and glutamate 176.

It belongs to the calcineurin regulatory subunit family. CHP subfamily. In terms of assembly, interacts with PPP3CA. Interacts with SLC9A1/NHE1; the interaction occurs in a calcium-dependent manner. Interacts with SLC9A1/NHE1.

The protein resides in the cytoplasm. It is found in the nucleus. The protein localises to the cell membrane. Functionally, functions as an integral cofactor in cell pH regulation by controlling plasma membrane-type Na(+)/H(+) exchange activity. Binds to and activates SLC9A1/NHE1 in a serum-independent manner, thus increasing pH and protecting cells from serum deprivation-induced death. Also plays a role in the regulation of cell proliferation and tumor growth by increasing the phosphatase activity of PPP3CA in a calcium-dependent manner. Activator of the calcineurin/NFAT signaling pathway. Involved in the cytoplasmic translocation of the transcription factor NFATC3 to the nucleus. This is Calcineurin B homologous protein 2 (Chp2) from Mus musculus (Mouse).